Consider the following 613-residue polypeptide: Zinc metalloproteinase-disintegrin-like EoVMP2 (613 aa).

The signal sequence occupies residues 1–20; the sequence is MMQVLLVTICLAVFPYQGSS. Residues 21 to 194 constitute a propeptide that is removed on maturation; it reads IILESGNVND…EASQLFATSE (174 aa). Position 195 is a pyrrolidone carboxylic acid (Gln-195). Residues 201 to 397 enclose the Peptidase M12B domain; it reads RYIEFFIVVD…RNPKCMINKP (197 aa). Residue Glu-204 coordinates Ca(2+). Residue Asn-219 is glycosylated (N-linked (GlcNAc...) asparagine). Residue Asp-288 coordinates Ca(2+). 3 disulfides stabilise this stretch: Cys-312–Cys-392, Cys-352–Cys-376, and Cys-354–Cys-359. His-337 contributes to the Zn(2+) binding site. Glu-338 is a catalytic residue. 2 residues coordinate Zn(2+): His-341 and His-347. N-linked (GlcNAc...) asparagine glycosylation occurs at Asn-375. Residues Cys-392, Asn-395, Val-407, Asn-410, Leu-412, Glu-414, Glu-417, and Asp-420 each contribute to the Ca(2+) site. In terms of domain architecture, Disintegrin spans 405-491; sequence PPVCGNGLLE…DCPIDGFHAN (87 aa). Cystine bridges form between Cys-408–Cys-437, Cys-419–Cys-432, Cys-421–Cys-427, Cys-431–Cys-454, Cys-445–Cys-451, Cys-450–Cys-476, Cys-463–Cys-483, Cys-470–Cys-502, Cys-495–Cys-507, Cys-514–Cys-564, Cys-529–Cys-575, Cys-542–Cys-552, Cys-559–Cys-601, and Cys-595–Cys-606. The D/ECD-tripeptide motif lies at 469–471; it reads DCD.

This sequence belongs to the venom metalloproteinase (M12B) family. P-III subfamily. P-IIIa sub-subfamily. As to quaternary structure, monomer. Zn(2+) serves as cofactor. In terms of tissue distribution, expressed by the venom gland.

It is found in the secreted. Its function is as follows. Snake venom zinc metalloprotease that possesses high hemorrhagic activity. It inhibits collagen-induced platelet aggregation and activates prothrombin (F2). The protein is Zinc metalloproteinase-disintegrin-like EoVMP2 (Svmp3-Eoc22) of Echis ocellatus (Ocellated saw-scaled viper).